Reading from the N-terminus, the 65-residue chain is MPKMKTNRAAAKRFKVTGSGRIRRSKGGLNHCMQEKSKKRLRRLRKNDMVDSAMEKRVKLLLPYG.

The protein belongs to the bacterial ribosomal protein bL35 family.

This Sorangium cellulosum (strain So ce56) (Polyangium cellulosum (strain So ce56)) protein is Large ribosomal subunit protein bL35.